The following is a 214-amino-acid chain: MGSAQSVPPEMRALAERTGFTSEQIEQLHRRFKQLNHNRKTIRKEDFDTIPDLEFNPIRARIVHAFFDKRNLRKAPAGLAEEINFEDFLTIMSYFRPIEMDMDEERLESFRKEKLKFLFHMYDADYDGIITLQEYKNVLDELMSGNPHLEKESLRAIAEGAMLEAASACMARTGPDEVYEGITFEDFLKVWKGIDIETKMHVRFLTMEAIAHCY.

Gly2 carries N-myristoyl glycine lipidation. Residues 110–145 (FRKEKLKFLFHMYDADYDGIITLQEYKNVLDELMSG) enclose the EF-hand domain. Residues Asp123, Asp125, Asp127, and Glu134 each contribute to the Ca(2+) site.

The protein belongs to the calcineurin regulatory subunit family. CHP subfamily. In terms of assembly, monomer. Homodimer. Expressed in the bipotential gonad by E4.5 and expressed in both the testis and ovary by E5.5, but with expression higher in the testis. Expressed in the testis cords but also at low levels in the interstitium. In the ovary, expression is principally in the ovarian cortex, but also in the medulla. Also expressed in the embryonic brain, with expression highest in the region between the nasal placode and olfactory bulb. Also expressed in the embryonic heart and tail.

The protein localises to the nucleus. It is found in the cytoplasm. It localises to the membrane. Its subcellular location is the cell membrane. The protein resides in the cell projection. The protein localises to the lamellipodium. It is found in the ruffle membrane. Functionally, functions as an integral cofactor in cell pH regulation by controlling plasma membrane-type Na(+)/H(+) exchange activity. Promotes the induction of hematopoietic stem cell differentiation toward megakaryocytic lineage. Essential for the coupling of ERK cascade activation with the expression of ETS family genes in megakaryocytic differentiation. Also involved in granulocytic differentiation in a ERK-dependent manner. Inhibits the phosphatase activity of calcineurin. The sequence is that of Calcineurin B homologous protein 3 from Gallus gallus (Chicken).